Here is a 420-residue protein sequence, read N- to C-terminus: Protein phosphatase methylesterase 1 (420 aa).

2 stretches are compositionally biased toward low complexity: residues 18–28 (PEAPLLSESSS) and 42–51 (SSVSSTGTVI). The segment at 18-51 (PEAPLLSESSSMNHPAESSHDEDSSSVSSTGTVI) is disordered. Active-site residues include S197, D223, and H354.

The protein belongs to the AB hydrolase superfamily.

It catalyses the reaction [phosphatase 2A protein]-C-terminal L-leucine methyl ester + H2O = [phosphatase 2A protein]-C-terminal L-leucine + methanol + H(+). Its function is as follows. Demethylates proteins that have been reversibly carboxymethylated. Demethylates the phosphatase PP2A catalytic subunit. This is Protein phosphatase methylesterase 1 (ppe1) from Aspergillus fumigatus (strain ATCC MYA-4609 / CBS 101355 / FGSC A1100 / Af293) (Neosartorya fumigata).